Reading from the N-terminus, the 346-residue chain is Phosphoribosylformylglycinamidine cyclo-ligase (346 aa).

The protein belongs to the AIR synthase family.

It is found in the cytoplasm. It catalyses the reaction 2-formamido-N(1)-(5-O-phospho-beta-D-ribosyl)acetamidine + ATP = 5-amino-1-(5-phospho-beta-D-ribosyl)imidazole + ADP + phosphate + H(+). Its pathway is purine metabolism; IMP biosynthesis via de novo pathway; 5-amino-1-(5-phospho-D-ribosyl)imidazole from N(2)-formyl-N(1)-(5-phospho-D-ribosyl)glycinamide: step 2/2. The polypeptide is Phosphoribosylformylglycinamidine cyclo-ligase (Geobacillus thermodenitrificans (strain NG80-2)).